Consider the following 271-residue polypeptide: Shikimate dehydrogenase (NADP(+)) (271 aa).

Shikimate-binding positions include 14 to 16 (SQS) and Thr61. Residue Lys65 is the Proton acceptor of the active site. Residues Asn86 and Asp101 each coordinate shikimate. NADP(+) contacts are provided by residues 125–129 (GAGGA), 148–153 (NRTHAR), and Met212. A shikimate-binding site is contributed by Tyr214. Position 236 (Gly236) interacts with NADP(+).

It belongs to the shikimate dehydrogenase family. Homodimer.

It catalyses the reaction shikimate + NADP(+) = 3-dehydroshikimate + NADPH + H(+). The protein operates within metabolic intermediate biosynthesis; chorismate biosynthesis; chorismate from D-erythrose 4-phosphate and phosphoenolpyruvate: step 4/7. Involved in the biosynthesis of the chorismate, which leads to the biosynthesis of aromatic amino acids. Catalyzes the reversible NADPH linked reduction of 3-dehydroshikimate (DHSA) to yield shikimate (SA). The protein is Shikimate dehydrogenase (NADP(+)) of Edwardsiella ictaluri (strain 93-146).